The chain runs to 177 residues: Large ribosomal subunit protein uL5 (177 aa).

It belongs to the universal ribosomal protein uL5 family. In terms of assembly, part of the 50S ribosomal subunit; part of the 5S rRNA/L5/L18/L25 subcomplex. Contacts the 5S rRNA and the P site tRNA. Forms a bridge to the 30S subunit in the 70S ribosome.

This is one of the proteins that bind and probably mediate the attachment of the 5S RNA into the large ribosomal subunit, where it forms part of the central protuberance. In the 70S ribosome it contacts protein S13 of the 30S subunit (bridge B1b), connecting the 2 subunits; this bridge is implicated in subunit movement. Contacts the P site tRNA; the 5S rRNA and some of its associated proteins might help stabilize positioning of ribosome-bound tRNAs. In Ehrlichia chaffeensis (strain ATCC CRL-10679 / Arkansas), this protein is Large ribosomal subunit protein uL5.